The following is a 133-amino-acid chain: Ribosome-binding factor A (133 aa).

This sequence belongs to the RbfA family. As to quaternary structure, monomer. Binds 30S ribosomal subunits, but not 50S ribosomal subunits or 70S ribosomes.

Its subcellular location is the cytoplasm. Functionally, one of several proteins that assist in the late maturation steps of the functional core of the 30S ribosomal subunit. Associates with free 30S ribosomal subunits (but not with 30S subunits that are part of 70S ribosomes or polysomes). Required for efficient processing of 16S rRNA. May interact with the 5'-terminal helix region of 16S rRNA. The protein is Ribosome-binding factor A of Acinetobacter baumannii (strain AB307-0294).